Here is a 151-residue protein sequence, read N- to C-terminus: MKLLLSFALLGLVACQEKCDSQNKYCFPNEVATWTGAVEYCLKNGWKLAVVNSEAKQMKIEGLAKNLPEFKNGKVELWIGASDQTKEGHFVWIANGQPIEYANWLPGKPDNKDGKEHCVHLWYEKAKKLNWGWNDVVCTSKRRFVCERKKK.

Residues 1 to 15 (MKLLLSFALLGLVAC) form the signal peptide. Residues 25–147 (YCFPNEVATW…CTSKRRFVCE (123 aa)) form the C-type lectin domain. 2 disulfides stabilise this stretch: Cys41–Cys146 and Cys118–Cys138.

The cofactor is Ca(2+). In terms of tissue distribution, expressed in female salivary gland. Not detected or low-level expression in female midgut and fat body.

The protein resides in the secreted. Salivary protein with carbohydrate-binding activity. Binds to D-mannose, D-galactose, D-glucose and maltose. Agglutinates host erythrocytes. Probably participates in mosquito innate immune responses to prevent microorganism multiplication in sugar and blood meals. In terms of biological role, (Microbial infection) Binds to the surface of and agglutinates Escherichia coli in vitro. Its function is as follows. (Microbial infection) Binds to the surface of and agglutinates Pseudomonas aeruginosa in vitro. Functionally, (Microbial infection) Binds to the surface of and agglutinates Bacillus subtilis in vitro. (Microbial infection) Agglutinates Staphylococcus aureus in vitro. In terms of biological role, (Microbial infection) Agglutinates Candida albicans in vitro. Its function is as follows. (Microbial infection) Does not affect replication of dengue virus type 2 in host cells. This Aedes albopictus (Asian tiger mosquito) protein is Salivary C-type lectin 2.